We begin with the raw amino-acid sequence, 314 residues long: Malate dehydrogenase (314 aa).

NAD(+) is bound by residues 11–16 and D35; that span reads GSGNIG. Residues R84 and R90 each contribute to the substrate site. NAD(+) is bound by residues N97 and 120–122; that span reads ITN. Residues N122 and R153 each coordinate substrate. The Proton acceptor role is filled by H177.

This sequence belongs to the LDH/MDH superfamily. MDH type 3 family.

It catalyses the reaction (S)-malate + NAD(+) = oxaloacetate + NADH + H(+). Functionally, catalyzes the reversible oxidation of malate to oxaloacetate. The protein is Malate dehydrogenase of Rickettsia typhi (strain ATCC VR-144 / Wilmington).